The sequence spans 82 residues: uncharacterized protein (82 aa).

This protein may be involved in virus assembly. This is an uncharacterized protein from Sulfolobus spindle-shape virus 1 (SSV1).